The primary structure comprises 106 residues: Putative double-stranded DNA mimic protein PM0536 (106 aa).

The protein belongs to the putative dsDNA mimic protein family.

Its function is as follows. May act as a double-stranded DNA (dsDNA) mimic. Probably regulates the activity of a dsDNA-binding protein. In Pasteurella multocida (strain Pm70), this protein is Putative double-stranded DNA mimic protein PM0536.